The sequence spans 207 residues: Small ribosomal subunit protein uS4 (207 aa).

The interval 31–53 (KAKFDSKPGQHGRTSGTRTSDFG) is disordered. Over residues 42–52 (GRTSGTRTSDF) the composition is skewed to polar residues. The 62-residue stretch at 97–158 (SRLDNVVYRM…KSKKQTRVTE (62 aa)) folds into the S4 RNA-binding domain.

Belongs to the universal ribosomal protein uS4 family. As to quaternary structure, part of the 30S ribosomal subunit. Contacts protein S5. The interaction surface between S4 and S5 is involved in control of translational fidelity.

Functionally, one of the primary rRNA binding proteins, it binds directly to 16S rRNA where it nucleates assembly of the body of the 30S subunit. In terms of biological role, with S5 and S12 plays an important role in translational accuracy. The protein is Small ribosomal subunit protein uS4 of Polaromonas sp. (strain JS666 / ATCC BAA-500).